A 90-amino-acid chain; its full sequence is uncharacterized protein (90 aa).

The next 2 helical transmembrane spans lie at 23-43 (ITTIHLLSSIGAINWGLVGLF) and 48-68 (VTLLFGSFPIIVTIFYIIIGF).

Its subcellular location is the cell membrane. This is an uncharacterized protein from Rickettsia prowazekii (strain Madrid E).